Consider the following 486-residue polypeptide: L-carnitine:corrinoid methyltransferase (486 aa).

It belongs to the trimethylamine methyltransferase family. In terms of assembly, the L-carnitine:THF methyl transfer system is composed of two methyltransferases, MtcB and MtqA, and the corrinoid protein MtqC.

It carries out the reaction Co(I)-[quaternary-amine-specific corrinoid protein] + (R)-carnitine + H(+) = (3R)-4-(dimethylamino)-3-hydroxybutanoate + methyl-Co(III)-[quaternary-amine-specific corrinoid protein]. Functionally, involved in the degradation of the quaternary amine L-carnitine. Component of a corrinoid-dependent methyltransferase system that transfers a methyl group from L-carnitine to tetrahydrofolate (THF), forming methyl-THF, a key intermediate in the Wood-Ljungdahl acetogenesis pathway. MtcB catalyzes the methylation of the corrinoid protein MtqC, using L-carnitine as the methyl donor. L-carnitine demethylation generates the unusual biological product norcarnitine, which is likely degraded by other members of the gut microbiota. In vitro, can methylate free cob(I)alamin. The polypeptide is L-carnitine:corrinoid methyltransferase (Eubacterium limosum).